The following is a 101-amino-acid chain: Large ribosomal subunit protein eL36 (101 aa).

Disordered stretches follow at residues 1–31 and 75–101; these read MGEIAVGLNKGHQVTKKAGTPRPSRRKGFLS and GTHMRGKKKREEMAGVLRKMQAASKGE.

It belongs to the eukaryotic ribosomal protein eL36 family.

This Ulva compressa (Green alga) protein is Large ribosomal subunit protein eL36 (RL36).